Here is a 457-residue protein sequence, read N- to C-terminus: Metal tolerance protein C4 (457 aa).

Residues 1-115 (MQSSHRILSR…IEINDQHSQR (115 aa)) are Cytoplasmic-facing. Residues 116–136 (AVTTALWCNFLVFSLKFGVWW) traverse the membrane as a helical segment. The Vacuolar portion of the chain corresponds to 137-141 (TSSSH). A helical transmembrane segment spans residues 142–162 (VIMAEVVHSVADFANQALLAY). Over 163–183 (GLSSSRRAPDALHPYGYSKER) the chain is Cytoplasmic. Residues 184 to 204 (FVWSLISAVGIFCLGSGATIV) traverse the membrane as a helical segment. The Vacuolar segment spans residues 205–220 (NGVQNLWTSSPPPNME). Residues 221–241 (LAAVVIGGSFLIEGASLLVAI) form a helical membrane-spanning segment. Residues 242–267 (QSVKKGAAQEGMTIRDYIWRGHDPTS) lie on the Cytoplasmic side of the membrane. The chain crosses the membrane as a helical span at residues 268–288 (VAVMTEDGAAVAGLAIAAASL). Over 289-297 (VAVRMTGNP) the chain is Vacuolar. The helical transmembrane segment at 298–318 (IYDPIGSIVVGNLLGMVAIFL) threads the bilayer. Topologically, residues 319-457 (IQRNRHALIG…HNPTPTDPSL (139 aa)) are cytoplasmic.

The protein belongs to the cation diffusion facilitator (CDF) transporter (TC 2.A.4) family.

It is found in the vacuole membrane. Involved in sequestration of excess metal in the cytoplasm into vacuoles to maintain metal homeostasis. The sequence is that of Metal tolerance protein C4 (MTPC4) from Arabidopsis thaliana (Mouse-ear cress).